The primary structure comprises 979 residues: UPF0182 protein Rv0064 (979 aa).

7 helical membrane-spanning segments follow: residues 19 to 41, 63 to 85, 114 to 136, 174 to 196, 208 to 230, 261 to 280, and 285 to 307; these read LVTAGMGMLALLLFGPRLVDIYV, LAIVAAVALVVAGIVLAALLLAY, LFGWGIAVTLGVVCGLIASFDWV, WLFVAVVLAFLASLLTHYLFGGL, AARVQLAVFAGAVVLLKAVAYWL, LVLVAIAVLCAVSFFTAIFL, and IPAMAAALLVLSAILVGGLWPLL. The segment at 898–948 is disordered; sequence GTGRVATARGGDAASAPPPGAGGPAPPQAVPPPRTTQPPAAPPRGPDVPPA. Positions 913 to 946 are enriched in pro residues; sequence APPPGAGGPAPPQAVPPPRTTQPPAAPPRGPDVP.

This sequence belongs to the UPF0182 family.

The protein resides in the cell membrane. This chain is UPF0182 protein Rv0064, found in Mycobacterium tuberculosis (strain ATCC 25618 / H37Rv).